The following is a 365-amino-acid chain: Outer membrane protein assembly factor BamC (365 aa).

A signal peptide spans 1–19 (MKHNRLAIAALAPVLILVG). The N-palmitoyl cysteine moiety is linked to residue Cys20. Cys20 is lipidated: S-diacylglycerol cysteine.

The protein belongs to the BamC family. In terms of assembly, part of the Bam complex.

The protein localises to the cell outer membrane. Its function is as follows. Part of the outer membrane protein assembly complex, which is involved in assembly and insertion of beta-barrel proteins into the outer membrane. This is Outer membrane protein assembly factor BamC from Ferrimonas balearica (strain DSM 9799 / CCM 4581 / KCTC 23876 / PAT).